The chain runs to 302 residues: Citrate lyase subunit beta (302 aa).

Arg76 and Glu139 together coordinate substrate. The Mg(2+) site is built by Glu139 and Asp166.

This sequence belongs to the HpcH/HpaI aldolase family. Citrate lyase beta subunit subfamily. In terms of assembly, oligomer with a subunit composition of (alpha,beta,gamma)6. The cofactor is Mg(2+).

The protein localises to the cytoplasm. It carries out the reaction citrate = oxaloacetate + acetate. It catalyses the reaction (3S)-citryl-CoA = oxaloacetate + acetyl-CoA. Functionally, represents a citryl-ACP lyase. The sequence is that of Citrate lyase subunit beta (citE) from Escherichia coli O6:H1 (strain CFT073 / ATCC 700928 / UPEC).